A 646-amino-acid polypeptide reads, in one-letter code: Cartilage acidic protein 1 (646 aa).

An N-terminal signal peptide occupies residues 1-28 (MAPSADPGMVRMALLLLPPLWLLPLTGG). Residues 47-89 (DYDSNPTQLNYGVAVTDVDHDGDFEIVVAGYTGPNLVLKYNRA) form an FG-GAP 1; atypical repeat. Residues 106–148 (YALRDRQGNAIGVTACDIDGDGREEIYFLNTNNAFSGVATYTD) form an FG-GAP 2; atypical repeat. Residues 284-334 (AGVDDPHQHGRGVALADFNRDGKVDIVYGNWNGPHRLYLQMSAHGKVRFRD) form an FG-GAP 3; atypical repeat. An FG-GAP 4; atypical repeat occupies 396-438 (GDALEPEGRGTGGVVTDFDGDGMLDLILSHGESMAQPLSVFRG). The EGF-like domain occupies 560–606 (DTNECIQFPFVCPRDKPVCVNTYGSYRCRTNKRCNRGYEPNEDGTAC). Intrachain disulfides connect C564/C578, C571/C587, and C593/C606.

It localises to the secreted. The protein localises to the extracellular space. The protein resides in the extracellular matrix. The polypeptide is Cartilage acidic protein 1 (Crtac1) (Mus musculus (Mouse)).